Consider the following 198-residue polypeptide: Armadillo repeat-containing protein 7 (198 aa).

ARM repeat units follow at residues 57-99 (QVLD…QAGG) and 100-140 (LPLI…TSLP). Residue Ser-169 is modified to Phosphoserine.

Component of the minor spliceosome. Within this complex, interacts with RBM48.

As a component of the minor spliceosome, involved in the splicing of U12-type introns in pre-mRNAs. The chain is Armadillo repeat-containing protein 7 (Armc7) from Mus musculus (Mouse).